Consider the following 453-residue polypeptide: Tubulin delta chain (453 aa).

143–149 serves as a coordination point for GTP; it reads AGGTGSG.

The protein belongs to the tubulin family. In terms of assembly, found in a complex with TEDC1, TEDC2, TUBE1 and TUBD1.

It localises to the nucleus. Its subcellular location is the cytoplasm. The protein localises to the cytoskeleton. It is found in the microtubule organizing center. The protein resides in the centrosome. It localises to the centriole. Its subcellular location is the cell projection. The protein localises to the cilium. In terms of biological role, acts as a positive regulator of hedgehog signaling and regulates ciliary function. This is Tubulin delta chain (TUBD1) from Macaca fascicularis (Crab-eating macaque).